The following is a 407-amino-acid chain: Arginine deiminase (407 aa).

Cysteine 397 serves as the catalytic Amidino-cysteine intermediate.

This sequence belongs to the arginine deiminase family.

The protein resides in the cytoplasm. It carries out the reaction L-arginine + H2O = L-citrulline + NH4(+). The protein operates within amino-acid degradation; L-arginine degradation via ADI pathway; carbamoyl phosphate from L-arginine: step 1/2. This Salmonella arizonae (strain ATCC BAA-731 / CDC346-86 / RSK2980) protein is Arginine deiminase.